Reading from the N-terminus, the 529-residue chain is Delayed-rectifier potassium channel regulatory subunit KCNS1 (529 aa).

Residues 1–217 (MLMLLVRGTH…LTMENPGYSL (217 aa)) lie on the Cytoplasmic side of the membrane. The helical transmembrane segment at 218 to 239 (PSKLFSCVSISVVLASIAAMCI) threads the bilayer. Residues 240 to 270 (HSLPEYQAREAAAAVAAVAAGRSPEGVRDDP) are Extracellular-facing. The helical transmembrane segment at 271–293 (VLRRLEYFCIAWFSFEVSSRLLL) threads the bilayer. Residues 294-304 (APSTRNFFCHP) lie on the Cytoplasmic side of the membrane. Residues 305-322 (LNLIDIVSVLPFYLTLLA) form a helical membrane-spanning segment. Residues 323-340 (GVALGDQGGTGGKELGHL) lie on the Extracellular side of the membrane. Residues 341 to 361 (GKVVQVFRLMRIFRVLKLARH) form a helical; Voltage-sensor membrane-spanning segment. At 362 to 376 (STGLRSLGATLKHSY) the chain is on the cytoplasmic side. The chain crosses the membrane as a helical span at residues 377–398 (REVGILLLYLAVGVSVFSGVAY). Residues 399 to 411 (TAEKEEDVGFNTI) lie on the Extracellular side of the membrane. The segment at residues 412–423 (PACWWWGTVSMT) is an intramembrane region (helical). The Selectivity filter motif lies at 424–429 (TVGYGD). An intramembrane segment occupies 424-431 (TVGYGDVV). Over 432-438 (PVTVAGK) the chain is Extracellular. Residues 439 to 467 (LAASGCILGGILVVALPITIIFNKFSHFY) traverse the membrane as a helical segment. Residues 468 to 529 (RRQKALEAAV…PSEPPHPQMY (62 aa)) are Cytoplasmic-facing. Residues 496–529 (SEASLETSRETSQEGRSADLETQAPSEPPHPQMY) are disordered. Positions 502-514 (TSRETSQEGRSAD) are enriched in basic and acidic residues.

Belongs to the potassium channel family. S (TC 1.A.1.2) subfamily. Kv9.1/KCNS1 sub-subfamily. As to quaternary structure, heterotetramer with KCNB1. Heterotetramer with KCNB2. Does not form homomultimers.

It localises to the cell membrane. Its function is as follows. Potassium channel regulatory subunit that modulate the delayed rectifier voltage-gated potassium channel activity of KCNB1 and KCNB2 by altering their kinetics, expression levels, and shifting the half-inactivation potential to more polarized values. While it does not form functional channels on its own, it can form functional heterotetrameric channels with KCNB1 and KCNB2. Each regulatory subunit has unique regulatory properties that can lead to extensive inhibition, significant changes in kinetics, and/or substantial shifts in the voltage dependencies of the inactivation process. This chain is Delayed-rectifier potassium channel regulatory subunit KCNS1, found in Papio anubis (Olive baboon).